A 242-amino-acid chain; its full sequence is Probable 2-phosphosulfolactate phosphatase (242 aa).

Belongs to the ComB family. Mg(2+) serves as cofactor.

It catalyses the reaction (2R)-O-phospho-3-sulfolactate + H2O = (2R)-3-sulfolactate + phosphate. The polypeptide is Probable 2-phosphosulfolactate phosphatase (Caldicellulosiruptor saccharolyticus (strain ATCC 43494 / DSM 8903 / Tp8T 6331)).